The primary structure comprises 104 residues: Large ribosomal subunit protein uL24 (104 aa).

Belongs to the universal ribosomal protein uL24 family. Part of the 50S ribosomal subunit.

Functionally, one of two assembly initiator proteins, it binds directly to the 5'-end of the 23S rRNA, where it nucleates assembly of the 50S subunit. In terms of biological role, one of the proteins that surrounds the polypeptide exit tunnel on the outside of the subunit. The chain is Large ribosomal subunit protein uL24 from Brevibacillus brevis (strain 47 / JCM 6285 / NBRC 100599).